The following is a 230-amino-acid chain: Cytidylate kinase (230 aa).

Position 12–20 (Gly-12–Thr-20) interacts with ATP.

It belongs to the cytidylate kinase family. Type 1 subfamily.

Its subcellular location is the cytoplasm. It carries out the reaction CMP + ATP = CDP + ADP. The catalysed reaction is dCMP + ATP = dCDP + ADP. This chain is Cytidylate kinase, found in Shewanella sp. (strain MR-4).